The chain runs to 334 residues: Ornithine carbamoyltransferase (334 aa).

Carbamoyl phosphate is bound by residues 57-60 (STRT), Gln84, Arg108, and 135-138 (HPTQ). Residues Asn168, Asp233, and 237 to 238 (SM) each bind L-ornithine. Carbamoyl phosphate contacts are provided by residues 275 to 276 (CL) and Arg320.

Belongs to the aspartate/ornithine carbamoyltransferase superfamily. OTCase family.

Its subcellular location is the cytoplasm. The catalysed reaction is carbamoyl phosphate + L-ornithine = L-citrulline + phosphate + H(+). It participates in amino-acid biosynthesis; L-arginine biosynthesis; L-arginine from L-ornithine and carbamoyl phosphate: step 1/3. In terms of biological role, reversibly catalyzes the transfer of the carbamoyl group from carbamoyl phosphate (CP) to the N(epsilon) atom of ornithine (ORN) to produce L-citrulline. The protein is Ornithine carbamoyltransferase of Thermobifida fusca (strain YX).